A 193-amino-acid chain; its full sequence is Small ribosomal subunit protein eS1 (193 aa).

The protein belongs to the eukaryotic ribosomal protein eS1 family.

The polypeptide is Small ribosomal subunit protein eS1 (Methanobrevibacter smithii (strain ATCC 35061 / DSM 861 / OCM 144 / PS)).